We begin with the raw amino-acid sequence, 446 residues long: Phosphoglucosamine mutase (446 aa).

The active-site Phosphoserine intermediate is serine 101. Mg(2+) contacts are provided by serine 101, aspartate 240, aspartate 242, and aspartate 244. A Phosphoserine modification is found at serine 101.

Belongs to the phosphohexose mutase family. Requires Mg(2+) as cofactor. Post-translationally, activated by phosphorylation.

The enzyme catalyses alpha-D-glucosamine 1-phosphate = D-glucosamine 6-phosphate. Its function is as follows. Catalyzes the conversion of glucosamine-6-phosphate to glucosamine-1-phosphate. This is Phosphoglucosamine mutase from Pseudomonas putida (strain ATCC 47054 / DSM 6125 / CFBP 8728 / NCIMB 11950 / KT2440).